The sequence spans 338 residues: DNA-directed RNA polymerase subunit alpha (338 aa).

An alpha N-terminal domain (alpha-NTD) region spans residues 1–226; the sequence is MLIAQRPSLT…ELFGLARELN (226 aa). The alpha C-terminal domain (alpha-CTD) stretch occupies residues 243-338; the sequence is LAADLVMPIE…DAGFLETEHY (96 aa).

The protein belongs to the RNA polymerase alpha chain family. Homodimer. The RNAP catalytic core consists of 2 alpha, 1 beta, 1 beta' and 1 omega subunit. When a sigma factor is associated with the core the holoenzyme is formed, which can initiate transcription.

It carries out the reaction RNA(n) + a ribonucleoside 5'-triphosphate = RNA(n+1) + diphosphate. Its function is as follows. DNA-dependent RNA polymerase catalyzes the transcription of DNA into RNA using the four ribonucleoside triphosphates as substrates. This chain is DNA-directed RNA polymerase subunit alpha, found in Streptomyces avermitilis (strain ATCC 31267 / DSM 46492 / JCM 5070 / NBRC 14893 / NCIMB 12804 / NRRL 8165 / MA-4680).